An 86-amino-acid chain; its full sequence is RNA-binding protein Hfq (86 aa).

The Sm domain maps to 9-68; it reads DPFLNALRRERIPVSIYLVNGIKLQGQIESFDQFVILLKNTVNQMVYKHAISTVVPARPV. Residues 65–86 are disordered; it reads ARPVSHHSGERGSDRPSEKSED. A compositionally biased stretch (basic and acidic residues) spans 71–86; that stretch reads HSGERGSDRPSEKSED.

It belongs to the Hfq family. Homohexamer.

Functionally, RNA chaperone that binds small regulatory RNA (sRNAs) and mRNAs to facilitate mRNA translational regulation in response to envelope stress, environmental stress and changes in metabolite concentrations. Also binds with high specificity to tRNAs. The polypeptide is RNA-binding protein Hfq (Vibrio vulnificus (strain YJ016)).